Here is an 861-residue protein sequence, read N- to C-terminus: Leucine--tRNA ligase (861 aa).

The 'HIGH' region signature appears at 42 to 52 (PYPSGRLHMGH). Residues 619–623 (KMSKS) carry the 'KMSKS' region motif. Residue lysine 622 participates in ATP binding.

Belongs to the class-I aminoacyl-tRNA synthetase family.

Its subcellular location is the cytoplasm. The catalysed reaction is tRNA(Leu) + L-leucine + ATP = L-leucyl-tRNA(Leu) + AMP + diphosphate. The chain is Leucine--tRNA ligase from Haemophilus influenzae (strain 86-028NP).